The following is a 25-amino-acid chain: Alanine racemase (25 aa).

This sequence belongs to the alanine racemase family. As to quaternary structure, homodimer. It depends on pyridoxal 5'-phosphate as a cofactor.

It carries out the reaction L-alanine = D-alanine. It functions in the pathway amino-acid biosynthesis; D-alanine biosynthesis; D-alanine from L-alanine: step 1/1. Catalyzes the interconversion of L-alanine and D-alanine. This is Alanine racemase from Pseudomonas fluorescens.